We begin with the raw amino-acid sequence, 390 residues long: Transaldolase (390 aa).

Residue K135 is the Schiff-base intermediate with substrate of the active site. EF-hand domains are found at residues 329 to 364 (AFCH…FDAL) and 365 to 388 (DHDH…LALT). Residues D342, D344, D346, C348, E353, D365, D367, D369, R371, and D376 each contribute to the Ca(2+) site.

The protein belongs to the transaldolase family. Type 1 subfamily.

The protein localises to the cytoplasm. It carries out the reaction D-sedoheptulose 7-phosphate + D-glyceraldehyde 3-phosphate = D-erythrose 4-phosphate + beta-D-fructose 6-phosphate. It participates in carbohydrate degradation; pentose phosphate pathway; D-glyceraldehyde 3-phosphate and beta-D-fructose 6-phosphate from D-ribose 5-phosphate and D-xylulose 5-phosphate (non-oxidative stage): step 2/3. Transaldolase is important for the balance of metabolites in the pentose-phosphate pathway. In Prochlorococcus marinus (strain MIT 9313), this protein is Transaldolase.